The following is a 548-amino-acid chain: Chaperonin GroEL 2 (548 aa).

ATP-binding positions include 30 to 33 (TLGP), Lys-51, 87 to 91 (DGTTT), Gly-415, 479 to 481 (NAA), and Asp-495. Positions 524–548 (APKDAPPTAPAGVPGAGAGGPGFDF) are disordered. Gly residues predominate over residues 537–548 (PGAGAGGPGFDF).

It belongs to the chaperonin (HSP60) family. Forms a cylinder of 14 subunits composed of two heptameric rings stacked back-to-back. Interacts with the co-chaperonin GroES.

The protein resides in the cytoplasm. It catalyses the reaction ATP + H2O + a folded polypeptide = ADP + phosphate + an unfolded polypeptide.. Functionally, together with its co-chaperonin GroES, plays an essential role in assisting protein folding. The GroEL-GroES system forms a nano-cage that allows encapsulation of the non-native substrate proteins and provides a physical environment optimized to promote and accelerate protein folding. This Burkholderia pseudomallei (strain 668) protein is Chaperonin GroEL 2.